We begin with the raw amino-acid sequence, 205 residues long: Holliday junction branch migration complex subunit RuvA (205 aa).

Residues 1-64 (MIGRLRGTLA…EDAHLLYGFA (64 aa)) form a domain I region. Residues 65–143 (EKRERELFRE…AWETSPAMFT (79 aa)) are domain II. Residues 144 to 154 (LVSDGPLPVAS) form a flexible linker region. The domain III stretch occupies residues 154-205 (SESSAEADAVSALVSLGYKPQEASKAIAAIKDKAGLSSEELIRRSLKGMISK).

It belongs to the RuvA family. As to quaternary structure, homotetramer. Forms an RuvA(8)-RuvB(12)-Holliday junction (HJ) complex. HJ DNA is sandwiched between 2 RuvA tetramers; dsDNA enters through RuvA and exits via RuvB. An RuvB hexamer assembles on each DNA strand where it exits the tetramer. Each RuvB hexamer is contacted by two RuvA subunits (via domain III) on 2 adjacent RuvB subunits; this complex drives branch migration. In the full resolvosome a probable DNA-RuvA(4)-RuvB(12)-RuvC(2) complex forms which resolves the HJ.

The protein localises to the cytoplasm. In terms of biological role, the RuvA-RuvB-RuvC complex processes Holliday junction (HJ) DNA during genetic recombination and DNA repair, while the RuvA-RuvB complex plays an important role in the rescue of blocked DNA replication forks via replication fork reversal (RFR). RuvA specifically binds to HJ cruciform DNA, conferring on it an open structure. The RuvB hexamer acts as an ATP-dependent pump, pulling dsDNA into and through the RuvAB complex. HJ branch migration allows RuvC to scan DNA until it finds its consensus sequence, where it cleaves and resolves the cruciform DNA. The sequence is that of Holliday junction branch migration complex subunit RuvA from Pseudomonas putida (strain ATCC 47054 / DSM 6125 / CFBP 8728 / NCIMB 11950 / KT2440).